An 824-amino-acid polypeptide reads, in one-letter code: AMP deaminase 2 (824 aa).

A disordered region spans residues 1–43 (MASYPGPGKSKAKYPFKKRAGLQASAAAPEARSGLGASPLQSA). Over residues 10–20 (SKAKYPFKKRA) the composition is skewed to basic residues. At arginine 44 the chain carries Omega-N-methylarginine. Residues serine 45, serine 63, and serine 79 each carry the phosphoserine modification. Tyrosine 90 is modified (phosphotyrosine). Serine 96 and serine 113 each carry phosphoserine. A Phosphothreonine modification is found at threonine 133. Phosphoserine occurs at positions 135 and 137. Histidine 364 and histidine 366 together coordinate Zn(2+). Residues histidine 366 and 435–440 (KFNAKY) each bind substrate. Histidine 633 provides a ligand contact to Zn(2+). Residue glutamate 636 coordinates substrate. Histidine 655 functions as the Proton acceptor in the catalytic mechanism. Aspartate 710 contacts Zn(2+). A substrate-binding site is contributed by 711–714 (DPLQ).

This sequence belongs to the metallo-dependent hydrolases superfamily. Adenosine and AMP deaminases family. Homotetramer. The cofactor is Zn(2+).

The enzyme catalyses AMP + H2O + H(+) = IMP + NH4(+). The protein operates within purine metabolism; IMP biosynthesis via salvage pathway; IMP from AMP: step 1/1. Functionally, AMP deaminase plays a critical role in energy metabolism. Catalyzes the deamination of AMP to IMP and plays an important role in the purine nucleotide cycle. The polypeptide is AMP deaminase 2 (Mus musculus (Mouse)).